A 166-amino-acid polypeptide reads, in one-letter code: SsrA-binding protein (166 aa).

A disordered region spans residues 143-166; that stretch reads HDKREDDKRKQANRDMKSALARYR. Over residues 144-159 the composition is skewed to basic and acidic residues; it reads DKREDDKRKQANRDMK.

It belongs to the SmpB family.

The protein resides in the cytoplasm. Its function is as follows. Required for rescue of stalled ribosomes mediated by trans-translation. Binds to transfer-messenger RNA (tmRNA), required for stable association of tmRNA with ribosomes. tmRNA and SmpB together mimic tRNA shape, replacing the anticodon stem-loop with SmpB. tmRNA is encoded by the ssrA gene; the 2 termini fold to resemble tRNA(Ala) and it encodes a 'tag peptide', a short internal open reading frame. During trans-translation Ala-aminoacylated tmRNA acts like a tRNA, entering the A-site of stalled ribosomes, displacing the stalled mRNA. The ribosome then switches to translate the ORF on the tmRNA; the nascent peptide is terminated with the 'tag peptide' encoded by the tmRNA and targeted for degradation. The ribosome is freed to recommence translation, which seems to be the essential function of trans-translation. The polypeptide is SsrA-binding protein (Prochlorococcus marinus (strain MIT 9211)).